We begin with the raw amino-acid sequence, 203 residues long: GTP-binding protein YPTC1 (203 aa).

GTP-binding positions include 15 to 23 (GDSGVGKSC), 33 to 40 (YTESYIST), 63 to 67 (DTAGQ), 121 to 124 (NKSD), and 151 to 153 (SAK). An Effector region motif is present at residues 37–45 (YISTIGVDF). Residues 174 to 203 (ASQPIPTKAGGPVVRPQEGKPINSKSSSCC) form a disordered region. 2 S-geranylgeranyl cysteine lipidation sites follow: cysteine 202 and cysteine 203.

The protein belongs to the small GTPase superfamily. Rab family.

It is found in the cell membrane. Functionally, protein transport. Probably involved in vesicular traffic. The protein is GTP-binding protein YPTC1 (YPTC1) of Chlamydomonas reinhardtii (Chlamydomonas smithii).